Reading from the N-terminus, the 494-residue chain is Glycerol kinase 1 (494 aa).

Threonine 12 lines the ADP pocket. Threonine 12, threonine 13, and serine 14 together coordinate ATP. Threonine 12 is a binding site for sn-glycerol 3-phosphate. Residue arginine 16 coordinates ADP. Sn-glycerol 3-phosphate is bound by residues arginine 82, glutamate 83, tyrosine 134, and aspartate 243. Positions 82, 83, 134, 243, and 244 each coordinate glycerol. Positions 265 and 308 each coordinate ADP. Threonine 265, glycine 308, glutamine 312, and glycine 408 together coordinate ATP. Residues glycine 408 and asparagine 412 each contribute to the ADP site.

It belongs to the FGGY kinase family.

It carries out the reaction glycerol + ATP = sn-glycerol 3-phosphate + ADP + H(+). Its pathway is polyol metabolism; glycerol degradation via glycerol kinase pathway; sn-glycerol 3-phosphate from glycerol: step 1/1. Its activity is regulated as follows. Inhibited by fructose 1,6-bisphosphate (FBP). Functionally, key enzyme in the regulation of glycerol uptake and metabolism. Catalyzes the phosphorylation of glycerol to yield sn-glycerol 3-phosphate. This is Glycerol kinase 1 from Pseudomonas aeruginosa (strain ATCC 15692 / DSM 22644 / CIP 104116 / JCM 14847 / LMG 12228 / 1C / PRS 101 / PAO1).